A 103-amino-acid polypeptide reads, in one-letter code: Cystatin-A1 (103 aa).

Positions 51-55 match the Secondary area of contact motif; the sequence is QVVAG.

The protein belongs to the cystatin family.

The protein resides in the cytoplasm. Its function is as follows. This is an intracellular thiol proteinase inhibitor. The chain is Cystatin-A1 from Sus scrofa (Pig).